Reading from the N-terminus, the 211-residue chain is Phosphoserine phosphatase (211 aa).

Residue D11 is the Nucleophile of the active site. 2 residues coordinate Mg(2+): D11 and D13. D13 (proton donor) is an active-site residue. Substrate-binding positions include E20, R56, 99–100, and K144; that span reads SG. A Mg(2+)-binding site is contributed by D167. N170 lines the substrate pocket.

The protein belongs to the HAD-like hydrolase superfamily. SerB family. It depends on Mg(2+) as a cofactor.

It carries out the reaction O-phospho-L-serine + H2O = L-serine + phosphate. It catalyses the reaction O-phospho-D-serine + H2O = D-serine + phosphate. It participates in amino-acid biosynthesis; L-serine biosynthesis; L-serine from 3-phospho-D-glycerate: step 3/3. In Methanocaldococcus jannaschii (strain ATCC 43067 / DSM 2661 / JAL-1 / JCM 10045 / NBRC 100440) (Methanococcus jannaschii), this protein is Phosphoserine phosphatase.